The chain runs to 386 residues: Putative gustatory receptor 22b (386 aa).

Residues 1 to 48 (MFGSSREIRPYLARQMLKTTLYGSWLLGIFPFTLDSGKRIRQLRRSRC) are Cytoplasmic-facing. A helical membrane pass occupies residues 49–69 (LTLYGLVLNYFLIFTLIRLAF). The Extracellular segment spans residues 70 to 89 (EYRKHKLEAFKRNPVLEMIN). A helical membrane pass occupies residues 90–110 (VVIGIINVLSALIVHFMNFWG). Residues 111–155 (SRKVGEICNELLILEYQDFEGLNGRNCPNFNCFVIQKCLTILGQL) lie on the Cytoplasmic side of the membrane. Residues 156-176 (LSFFTLNFALPGLEFHICLVL) form a helical membrane-spanning segment. Over 177 to 178 (LS) the chain is Extracellular. Residues 179 to 199 (CLMEFSLNLNIMHYHVGVLLI) traverse the membrane as a helical segment. Over 200–254 (YRYVWLINEQLKDLVSQLKLNPETDFSRIHQFLSLYKRLLELNRKLVIAYEYQMT) the chain is Cytoplasmic. Residues 255–275 (LFIIAQLSGNIVVIYFLIVYG) traverse the membrane as a helical segment. At 276-282 (LSMRTYS) the chain is on the extracellular side. Residues 283-303 (IFLVAFPNSLLINIWDFWLCI) form a helical membrane-spanning segment. Over 304 to 363 (AACDLTEKAGDETAIILKIFSDLEHRDDKLEMSVNEFAWLCSHRKFRFQLCGLFSMNCRM) the chain is Cytoplasmic. The chain crosses the membrane as a helical span at residues 364-384 (GFKMIITTFLYLVYLVQFDYM). The Extracellular portion of the chain corresponds to 385–386 (NL).

It belongs to the insect chemoreceptor superfamily. Gustatory receptor (GR) family. Gr22e subfamily. Expressed in taste bristles in the foreleg and labial palps. In larvae, is expressed in neurons of the dorsal and posterior pharyngeal sense organs. Expressed in taste neurons that mediate sensitivity to bitter compounds.

Its subcellular location is the cell membrane. Probable gustatory receptor which mediates acceptance or avoidance behavior, depending on its substrates. Seems to be involved in the sensing of bitter taste since it is expressed in neurons that mediate sensitivity to bitter compounds. The protein is Putative gustatory receptor 22b of Drosophila melanogaster (Fruit fly).